We begin with the raw amino-acid sequence, 1789 residues long: Protein TIC 214 (1789 aa).

6 consecutive transmembrane segments (helical) span residues 19–39, 68–88, 91–111, 133–153, 176–196, and 227–247; these read IINS…FSIG, FIAG…HLAL, PHTI…WNNH, VFLN…SSML, VGWL…LVWI, and IFSI…PSPI.

It belongs to the TIC214 family. In terms of assembly, part of the Tic complex.

The protein resides in the plastid. It localises to the chloroplast inner membrane. Functionally, involved in protein precursor import into chloroplasts. May be part of an intermediate translocation complex acting as a protein-conducting channel at the inner envelope. The polypeptide is Protein TIC 214 (Capsella bursa-pastoris (Shepherd's purse)).